Here is a 995-residue protein sequence, read N- to C-terminus: UPF0182 protein NFA_45260 (995 aa).

7 consecutive transmembrane segments (helical) span residues 18–38, 63–83, 115–135, 176–196, 211–231, 260–280, and 288–308; these read VLLV…RFTD, IILF…ALLL, FGIG…QSNW, FVAV…FGGL, IQLA…YWFD, KLIL…GVVL, and MAAA…PLVV. A disordered region spans residues 904–957; the sequence is ATPFGGDPATRPQPGTAPPVVDSTQPPADGGTPQPQTTPPPTGSAAKDAAAAEL. Composition is skewed to low complexity over residues 927 to 938 and 946 to 955; these read TQPPADGGTPQP and GSAAKDAAAA.

This sequence belongs to the UPF0182 family.

It is found in the cell membrane. This is UPF0182 protein NFA_45260 from Nocardia farcinica (strain IFM 10152).